The following is a 218-amino-acid chain: Octanoyltransferase (218 aa).

The BPL/LPL catalytic domain maps to 30–217; sequence GEAGELVWLV…SFARNFPPLA (188 aa). Residues 68 to 75, 148 to 150, and 161 to 163 contribute to the substrate site; these read RGGQYTYH, AIG, and GIA. Residue cysteine 179 is the Acyl-thioester intermediate of the active site.

It belongs to the LipB family.

It is found in the cytoplasm. The enzyme catalyses octanoyl-[ACP] + L-lysyl-[protein] = N(6)-octanoyl-L-lysyl-[protein] + holo-[ACP] + H(+). Its pathway is protein modification; protein lipoylation via endogenous pathway; protein N(6)-(lipoyl)lysine from octanoyl-[acyl-carrier-protein]: step 1/2. In terms of biological role, catalyzes the transfer of endogenously produced octanoic acid from octanoyl-acyl-carrier-protein onto the lipoyl domains of lipoate-dependent enzymes. Lipoyl-ACP can also act as a substrate although octanoyl-ACP is likely to be the physiological substrate. The polypeptide is Octanoyltransferase (Paracoccus denitrificans (strain Pd 1222)).